The primary structure comprises 98 residues: Large ribosomal subunit protein eL30 (98 aa).

Belongs to the eukaryotic ribosomal protein eL30 family.

This chain is Large ribosomal subunit protein eL30, found in Methanosphaera stadtmanae (strain ATCC 43021 / DSM 3091 / JCM 11832 / MCB-3).